Consider the following 109-residue polypeptide: Thioredoxin 1 (109 aa).

The region spanning 2–109 is the Thioredoxin domain; the sequence is SDKIIHLTDD…LKEFLDANLA (108 aa). Active-site nucleophile residues include Cys-33 and Cys-36. Cysteines 33 and 36 form a disulfide. Lys-70 is subject to N6-acetyllysine.

This sequence belongs to the thioredoxin family. In terms of assembly, monomer.

Its function is as follows. Participates in various redox reactions through the reversible oxidation of its active center dithiol to a disulfide and catalyzes dithiol-disulfide exchange reactions. This chain is Thioredoxin 1 (trxA), found in Escherichia coli O157:H7.